The sequence spans 258 residues: Global transcriptional regulator CodY (258 aa).

The interval Met-1–Leu-156 is GAF domain. The segment at residues Ala-204–Arg-223 is a DNA-binding region (H-T-H motif).

Belongs to the CodY family.

The protein localises to the cytoplasm. Functionally, DNA-binding global transcriptional regulator which is involved in the adaptive response to starvation and acts by directly or indirectly controlling the expression of numerous genes in response to nutrient availability. During rapid exponential growth, CodY is highly active and represses genes whose products allow adaptation to nutrient depletion. This is Global transcriptional regulator CodY from Clostridium kluyveri (strain NBRC 12016).